The primary structure comprises 439 residues: MLTPEENLLLCRVEGDAPMGQMMRRHWTPVCLLEEVSEPDGTPVRARLFGEDLVVFRDTDGRVGVMDEYCPHRRVSLIYGRNENSGLRCLYHGWKMDVDGNVVEMVSEPAASNMCQKVKHTAYKTREWGGFVWAYMGPQDAIPEFVPPAWAPHEHVRVSIAKAIIPCNWAQILEGAIDSAHSSSLHSSDFVPARVGGAEATSKNWLRPSTDKAPRMQVERTSYGFRYAALRRPIQNAATSEYVRSTVFVAPATALIPPNNLYNVANINVPIDDTHTAFYFMAWGNPDNTPETETWRKFLGQQVGIDLDDSYRPLRNDGNRFFQDREAMKNGNFTGIKGFPNQDIAMWVTMGPIADRSDERLGASDLAVVEFRRVMLDALAAFQAGESAIGTGEKAIPSRICSFQAIVSKDIDWRDYQARYVWALDDANIVAEPDYEVHT.

Positions 27-134 (WTPVCLLEEV…TREWGGFVWA (108 aa)) constitute a Rieske domain. [2Fe-2S] cluster contacts are provided by C70, H72, C89, and H92. Residues H181 and H186 each coordinate Fe cation.

It belongs to the bacterial ring-hydroxylating dioxygenase alpha subunit family. As to quaternary structure, this dioxygenase system consists of two proteins: phthalate oxygenase and phthalate oxygenase reductase. [2Fe-2S] cluster serves as cofactor. Fe cation is required as a cofactor.

It catalyses the reaction phthalate + NADH + O2 + H(+) = cis-4,5-dihydroxycyclohexa-2,6-diene-1,2-dicarboxylate + NAD(+). Its pathway is xenobiotic degradation; phthalate degradation; 3,4-dihydroxybenzoate from phthalate: step 1/3. This is Phthalate 4,5-dioxygenase oxygenase subunit (pht3) from Pseudomonas putida (Arthrobacter siderocapsulatus).